We begin with the raw amino-acid sequence, 206 residues long: MTKSEKRQHDILRYIFSHVSDSGYPPTVREICNAVGLSSTSTVHGHLSKLESKGLIKRDPTKPRAIEITLAGLEMLDELPNKTQIPIVGTVTAGEPILAVEENRDYFPLPPYFESADDLFMLSIRGESMINAGILDGDQVIVRKQSSANNGEIVIAMTEENEATCKRFFKEDGYYRLQPENDTMDPIILENVTILGKVVGLYRDLI.

The segment at residues 28–48 (VREICNAVGLSSTSTVHGHLS) is a DNA-binding region (H-T-H motif). Active-site for autocatalytic cleavage activity residues include serine 128 and lysine 166.

It belongs to the peptidase S24 family. In terms of assembly, homodimer.

It catalyses the reaction Hydrolysis of Ala-|-Gly bond in repressor LexA.. In terms of biological role, represses a number of genes involved in the response to DNA damage (SOS response), including recA and lexA. In the presence of single-stranded DNA, RecA interacts with LexA causing an autocatalytic cleavage which disrupts the DNA-binding part of LexA, leading to derepression of the SOS regulon and eventually DNA repair. The protein is LexA repressor of Ligilactobacillus salivarius (strain UCC118) (Lactobacillus salivarius).